The sequence spans 113 residues: Large ribosomal subunit protein P2 (113 aa).

Residues Ser-60–Tyr-113 form a disordered region. A compositionally biased stretch (low complexity) spans Gly-74 to Ala-85. Acidic residues predominate over residues Glu-88–Asp-99.

Belongs to the eukaryotic ribosomal protein P1/P2 family. P1 and P2 exist as dimers at the large ribosomal subunit. In terms of processing, phosphorylated.

Its function is as follows. Plays an important role in the elongation step of protein synthesis. The protein is Large ribosomal subunit protein P2 of Euplotes raikovi.